The chain runs to 402 residues: Multidrug resistance protein MdtH (402 aa).

At 1 to 12 the chain is on the cytoplasmic side; the sequence is MSRVSQARNLGK. A helical transmembrane segment spans residues 13-33; that stretch reads YFLLIDNMLVVLGFFVVFPLI. Over 34 to 98 the chain is Periplasmic; the sequence is SIRFVDQMGW…GFATMGIAHE (65 aa). A helical membrane pass occupies residues 99 to 116; the sequence is PWLLWFSCLLSGLGGTLF. Residues 117 to 138 are Cytoplasmic-facing; the sequence is DPPRSALVVKLIRPQQRGRFFS. The helical transmembrane segment at 139-159 threads the bilayer; the sequence is LLMMQDSAGAVIGALLGSWLL. Topologically, residues 160–164 are periplasmic; it reads QYDFR. Residues 165 to 185 form a helical membrane-spanning segment; that stretch reads LVCATGAVLFVLCAAFNAWLL. At 186–213 the chain is on the cytoplasmic side; sequence PAWKLSTVRTPVREGMTRVMRDKRFVTY. Residues 214–234 form a helical membrane-spanning segment; that stretch reads VLTLAGYYMLAVQVMLMLPIM. Topologically, residues 235–243 are periplasmic; it reads VNDVAGAPS. A helical membrane pass occupies residues 244–264; that stretch reads AVKWMYAIEACLSLTLLYPIA. Over 265 to 276 the chain is Cytoplasmic; it reads RWSEKHFRLEHR. A helical transmembrane segment spans residues 277–297; it reads LMAGLLIMSLSMMPVGMVSGL. Topologically, residues 298-299 are periplasmic; the sequence is QQ. Residues 300–320 form a helical membrane-spanning segment; it reads LFTLICLFYIGSIIAEPARET. Residues 321–339 lie on the Cytoplasmic side of the membrane; it reads LSASLADARARGSYMGFSR. A helical membrane pass occupies residues 340-360; the sequence is LGLAIGGAIGYIGGGWLFDLG. The Periplasmic segment spans residues 361-367; the sequence is KSAHQPE. Residues 368-388 form a helical membrane-spanning segment; the sequence is LPWMMLGIIGIFTFLALGWQF. Over 389-402 the chain is Cytoplasmic; sequence SQKRTARRLLERDA.

It belongs to the major facilitator superfamily. DHA1 family. MdtH (TC 2.A.1.2.21) subfamily.

The protein localises to the cell inner membrane. Its function is as follows. Confers resistance to norfloxacin and enoxacin. This is Multidrug resistance protein MdtH from Escherichia coli O7:K1 (strain IAI39 / ExPEC).